We begin with the raw amino-acid sequence, 308 residues long: MKSIKRFALSAMGAAMLLVLTGCVNVDKTTGQPTGFIWNTIGAPMAEAIKYFATDKGLGFGVAIIIVTIIVRLIILPLGIYQSWKATLHSEKMNALKHVLEPHQTRLKEATTQEEKLEAQQALFAAQKEHGISMFGGVGCFPILLQMPFFSAIYFAAQHTEGVAQASYLGIPLGSPSMILVACAGVLYYLQSLLSLHGVEDEMQREQIKKMIYMSPLMIVVFSLFSPASVTLYWVVGGFMMILQQFIVNYIVRPKLRKKVHEELAKNPSKASAFSTPSGRKDVTPEQPTAITSKKKHKNRNAGKQRSR.

A signal peptide spans Met-1 to Gly-22. A lipid anchor (N-palmitoyl cysteine) is attached at Cys-23. Cys-23 is lipidated: S-diacylglycerol cysteine. Helical transmembrane passes span Phe-60–Ile-80, Phe-135–Phe-155, Tyr-168–Tyr-188, Met-211–Phe-225, and Val-230–Val-252. The segment at Glu-263–Arg-308 is disordered. Residues Ser-269–Ser-278 are compositionally biased toward polar residues. Positions Ser-293–Arg-308 are enriched in basic residues.

It belongs to the OXA1/ALB3/YidC family. Type 2 subfamily.

It is found in the cell membrane. In terms of biological role, required for the insertion and/or proper folding and/or complex formation of integral membrane proteins into the membrane. Involved in integration of membrane proteins that insert both dependently and independently of the Sec translocase complex, as well as at least some lipoproteins. This Streptococcus pneumoniae (strain ATCC BAA-255 / R6) protein is Membrane protein insertase YidC 1.